We begin with the raw amino-acid sequence, 279 residues long: ATP synthase gamma chain (279 aa).

This sequence belongs to the ATPase gamma chain family. F-type ATPases have 2 components, CF(1) - the catalytic core - and CF(0) - the membrane proton channel. CF(1) has five subunits: alpha(3), beta(3), gamma(1), delta(1), epsilon(1). CF(0) has three main subunits: a, b and c.

The protein localises to the cell membrane. In terms of biological role, produces ATP from ADP in the presence of a proton gradient across the membrane. The gamma chain is believed to be important in regulating ATPase activity and the flow of protons through the CF(0) complex. The protein is ATP synthase gamma chain of Mycoplasmopsis pulmonis (strain UAB CTIP) (Mycoplasma pulmonis).